The following is a 278-amino-acid chain: Probable endonuclease 4 (278 aa).

9 residues coordinate Zn(2+): His69, His109, Glu145, Asp179, His182, His216, Asp229, His231, and Glu261.

The protein belongs to the AP endonuclease 2 family. Requires Zn(2+) as cofactor.

It carries out the reaction Endonucleolytic cleavage to 5'-phosphooligonucleotide end-products.. In terms of biological role, endonuclease IV plays a role in DNA repair. It cleaves phosphodiester bonds at apurinic or apyrimidinic (AP) sites, generating a 3'-hydroxyl group and a 5'-terminal sugar phosphate. In Buchnera aphidicola subsp. Baizongia pistaciae (strain Bp), this protein is Probable endonuclease 4.